The primary structure comprises 421 residues: Serine--tRNA ligase (421 aa).

Residue 230 to 232 (TAE) participates in L-serine binding. 259-261 (RRE) provides a ligand contact to ATP. E282 contacts L-serine. ATP is bound at residue 346-349 (EISS). Residue S380 participates in L-serine binding.

This sequence belongs to the class-II aminoacyl-tRNA synthetase family. Type-1 seryl-tRNA synthetase subfamily. As to quaternary structure, homodimer. The tRNA molecule binds across the dimer.

It is found in the cytoplasm. It catalyses the reaction tRNA(Ser) + L-serine + ATP = L-seryl-tRNA(Ser) + AMP + diphosphate + H(+). The enzyme catalyses tRNA(Sec) + L-serine + ATP = L-seryl-tRNA(Sec) + AMP + diphosphate + H(+). It functions in the pathway aminoacyl-tRNA biosynthesis; selenocysteinyl-tRNA(Sec) biosynthesis; L-seryl-tRNA(Sec) from L-serine and tRNA(Sec): step 1/1. Functionally, catalyzes the attachment of serine to tRNA(Ser). Is also able to aminoacylate tRNA(Sec) with serine, to form the misacylated tRNA L-seryl-tRNA(Sec), which will be further converted into selenocysteinyl-tRNA(Sec). This chain is Serine--tRNA ligase, found in Methanosarcina acetivorans (strain ATCC 35395 / DSM 2834 / JCM 12185 / C2A).